Reading from the N-terminus, the 147-residue chain is D-aminoacyl-tRNA deacylase (147 aa).

The Gly-cisPro motif, important for rejection of L-amino acids motif lies at 136-137 (GP).

Belongs to the DTD family. As to quaternary structure, homodimer.

The protein localises to the cytoplasm. The enzyme catalyses glycyl-tRNA(Ala) + H2O = tRNA(Ala) + glycine + H(+). It catalyses the reaction a D-aminoacyl-tRNA + H2O = a tRNA + a D-alpha-amino acid + H(+). Its function is as follows. An aminoacyl-tRNA editing enzyme that deacylates mischarged D-aminoacyl-tRNAs. Also deacylates mischarged glycyl-tRNA(Ala), protecting cells against glycine mischarging by AlaRS. Acts via tRNA-based rather than protein-based catalysis; rejects L-amino acids rather than detecting D-amino acids in the active site. By recycling D-aminoacyl-tRNA to D-amino acids and free tRNA molecules, this enzyme counteracts the toxicity associated with the formation of D-aminoacyl-tRNA entities in vivo and helps enforce protein L-homochirality. The protein is D-aminoacyl-tRNA deacylase of Streptococcus equi subsp. zooepidemicus (strain MGCS10565).